The chain runs to 307 residues: Cyclin-dependent kinase 5 activator 1 (307 aa).

Phosphoserine; by CDK5 is present on S8. Positions 96 to 136 (STFAQPPPAQPPAPPANQLSGSQTGVSSSVKKAPHPSVTSA) are disordered. Over residues 100–110 (QPPPAQPPAPP) the composition is skewed to pro residues. Polar residues predominate over residues 112-125 (NQLSGSQTGVSSSV). T138 bears the Phosphothreonine; by CDK5 mark.

It belongs to the cyclin-dependent kinase 5 activator family. As to quaternary structure, heterodimer composed of a catalytic subunit CDK5 and a regulatory subunit CDK5R1 (p25) and macromolecular complex composed of at least CDK5, CDK5R1 (p35) and CDK5RAP1 or CDK5RAP2 or CDK5RAP3. Only the heterodimer shows kinase activity. Interacts with EPHA4 and NGEF; may mediate the activation of NGEF by EPHA4. Interacts with RASGRF2. The complex p35/CDK5 interacts with CLOCK. Post-translationally, the p35 form is proteolytically cleaved by calpain, giving rise to the p25 form. P35 has a 5 to 10 fold shorter half-life compared to p25. The conversion results in deregulation of the CDK5 kinase: p25/CDK5 kinase displays an increased and altered tau phosphorylation in comparison to the p35/CDK5 kinase in vivo. Myristoylated. A proper myristoylation signal is essential for the proper distribution of p35. In terms of processing, phosphorylation at Ser-8 and Thr-138 by CDK5 prevents calpain-mediated proteolysis. Post-translationally, ubiquitinated, leading to its degradation: degradation of p35 by proteasome results in down-regulation of CDK5 activity. During this process, CDK5 phosphorylates p35 and induces its ubiquitination and subsequent degradation. Ubiquitinated by the CRL2(FEM1B) complex, which recognizes the -Gly-Leu-Asp-Arg C-degron at the C-terminus, leading to its degradation. As to expression, brain and neuron specific.

The protein resides in the cell membrane. Its subcellular location is the cell projection. It is found in the neuron projection. The protein localises to the nucleus. It localises to the cytoplasm. The protein resides in the perinuclear region. Its subcellular location is the perikaryon. Functionally, p35 is a neuron specific activator of CDK5. The complex p35/CDK5 is required for neurite outgrowth and cortical lamination. Involved in dendritic spine morphogenesis by mediating the EFNA1-EPHA4 signaling. Activator of TPKII. The complex p35/CDK5 participates in the regulation of the circadian clock by modulating the function of CLOCK protein: phosphorylates CLOCK at 'Thr-451' and 'Thr-461' and regulates the transcriptional activity of the CLOCK-BMAL1 heterodimer in association with altered stability and subcellular distribution. This chain is Cyclin-dependent kinase 5 activator 1 (CDK5R1), found in Spermophilus citellus (European ground squirrel).